Reading from the N-terminus, the 364-residue chain is MPGLPTPRRLVASVNYRRTRTVEDSRMPLTEHLRELRNRVAIALLAFAIAGVVCFIFEPRIFDWLKAPYCDLPASKRFSPDGLAANDCTLYFFGILDAFTIRLKISMIAAVVVSSPVWLYQLWSFITPGLHRHERRWSLTFVGVSLVLFATGAVFAYLTLSTGLGLLLGFGGNGLVSVLDGNRYLSYVQAMLLIFGLSFEVPLLVMMLNLAGIVSTAKLRSWRRPEIFLVFVFAAVVTPSQDPFTMLALGLPMVLLYEVALIIGWLNDRRVARRGDTSPYADLDDDETSPLDFDDAPPRPAASAGPAATATSPGTANPPGTANPPGTANPVGTANPVGTGSSTPVGAGTAPVSPSTDVTHGDIT.

A run of 7 helical transmembrane segments spans residues 42-62, 107-127, 139-159, 160-180, 194-214, 225-245, and 246-266; these read IALL…PRIF, MIAA…SFIT, LTFV…AYLT, LSTG…SVLD, IFGL…AGIV, PEIF…DPFT, and MLAL…IGWL. The interval 277–364 is disordered; sequence TSPYADLDDD…STDVTHGDIT (88 aa). The segment covering 282-295 has biased composition (acidic residues); it reads DLDDDETSPLDFDD. A compositionally biased stretch (low complexity) spans 301-320; the sequence is AASAGPAATATSPGTANPPG. Residues 324–344 are compositionally biased toward polar residues; that stretch reads PPGTANPVGTANPVGTGSSTP.

The protein belongs to the TatC family. In terms of assembly, the Tat system comprises two distinct complexes: a TatABC complex, containing multiple copies of TatA, TatB and TatC subunits, and a separate TatA complex, containing only TatA subunits. Substrates initially bind to the TatABC complex, which probably triggers association of the separate TatA complex to form the active translocon.

The protein localises to the cell membrane. Its function is as follows. Part of the twin-arginine translocation (Tat) system that transports large folded proteins containing a characteristic twin-arginine motif in their signal peptide across membranes. Together with TatB, TatC is part of a receptor directly interacting with Tat signal peptides. The polypeptide is Sec-independent protein translocase protein TatC (Frankia casuarinae (strain DSM 45818 / CECT 9043 / HFP020203 / CcI3)).